Here is a 234-residue protein sequence, read N- to C-terminus: Putative methyltransferase-like protein 15P1 (234 aa).

S-adenosyl-L-methionine-binding positions include 100 to 102 (GGH), Asp-119, Phe-146, Asp-169, and Gln-176.

The protein belongs to the methyltransferase superfamily. RsmH family.

Probable S-adenosyl-L-methionine-dependent methyltransferase. The protein is Putative methyltransferase-like protein 15P1 (METTL15P1) of Homo sapiens (Human).